The sequence spans 271 residues: Hachiman protein HamA (271 aa).

Its function is as follows. Component of antiviral defense system Hachiman, composed of HamA and HamB. Expression of Hachiman in B.subtilis (strain BEST7003) confers resistance to phages phi105, phi29, phi3T, rho14, SBSphiJ, SpBeta and SPR. The chain is Hachiman protein HamA from Bacillus cereus.